We begin with the raw amino-acid sequence, 364 residues long: Probable 7-methylxanthine methyltransferase 5 (364 aa).

Tyrosine 19 serves as a coordination point for S-adenosyl-L-homocysteine. Threonine 26 provides a ligand contact to theobromine. 6 residues coordinate S-adenosyl-L-homocysteine: cysteine 64, glutamine 69, aspartate 101, leucine 102, serine 134, and phenylalanine 135. 3 residues coordinate theobromine: tyrosine 152, histidine 155, and tryptophan 156. Asparagine 172, aspartate 258, phenylalanine 260, and asparagine 261 together coordinate Mg(2+). Phenylalanine 314 contributes to the theobromine binding site.

The protein belongs to the methyltransferase superfamily. Type-7 methyltransferase family. Requires Mg(2+) as cofactor.

The enzyme catalyses 7-methylxanthine + S-adenosyl-L-methionine = theobromine + S-adenosyl-L-homocysteine + H(+). The protein operates within alkaloid biosynthesis. Functionally, involved in the biosynthesis of theobromine. This is Probable 7-methylxanthine methyltransferase 5 from Theobroma cacao (Cacao).